We begin with the raw amino-acid sequence, 417 residues long: NADH-quinone oxidoreductase subunit D (417 aa).

This sequence belongs to the complex I 49 kDa subunit family. NDH-1 is composed of 14 different subunits. Subunits NuoB, C, D, E, F, and G constitute the peripheral sector of the complex.

The protein resides in the cell inner membrane. The catalysed reaction is a quinone + NADH + 5 H(+)(in) = a quinol + NAD(+) + 4 H(+)(out). In terms of biological role, NDH-1 shuttles electrons from NADH, via FMN and iron-sulfur (Fe-S) centers, to quinones in the respiratory chain. The immediate electron acceptor for the enzyme in this species is believed to be ubiquinone. Couples the redox reaction to proton translocation (for every two electrons transferred, four hydrogen ions are translocated across the cytoplasmic membrane), and thus conserves the redox energy in a proton gradient. The sequence is that of NADH-quinone oxidoreductase subunit D from Verminephrobacter eiseniae (strain EF01-2).